Here is a 368-residue protein sequence, read N- to C-terminus: NAD(P)H-quinone oxidoreductase subunit 1, chloroplastic (368 aa).

The next 9 membrane-spanning stretches (helical) occupy residues 27 to 47, 97 to 117, 130 to 150, 166 to 186, 204 to 224, 249 to 269, 270 to 290, 305 to 325, and 348 to 368; these read FLWIIFSILILMLGVTIGVLV, WLFNIGPILVLIPVFLSYLVI, IGVFFWIAVSSVVPLGLLMAG, AAQSISYEIPLALSVLSIALL, FLSWNLWRQPIGFIVFFIASL, YSGMKFAFFYLASYLNLLVSS, LFVTILYLGGWHFSIPFFSLF, VISIIIGIVITLVKSYLFLFI, and FLLPIALGNLLLTTSFQLFLL.

This sequence belongs to the complex I subunit 1 family. As to quaternary structure, NDH is composed of at least 16 different subunits, 5 of which are encoded in the nucleus.

It is found in the plastid. The protein localises to the chloroplast thylakoid membrane. The catalysed reaction is a plastoquinone + NADH + (n+1) H(+)(in) = a plastoquinol + NAD(+) + n H(+)(out). It carries out the reaction a plastoquinone + NADPH + (n+1) H(+)(in) = a plastoquinol + NADP(+) + n H(+)(out). Functionally, NDH shuttles electrons from NAD(P)H:plastoquinone, via FMN and iron-sulfur (Fe-S) centers, to quinones in the photosynthetic chain and possibly in a chloroplast respiratory chain. The immediate electron acceptor for the enzyme in this species is believed to be plastoquinone. Couples the redox reaction to proton translocation, and thus conserves the redox energy in a proton gradient. The polypeptide is NAD(P)H-quinone oxidoreductase subunit 1, chloroplastic (Marchantia polymorpha (Common liverwort)).